The chain runs to 461 residues: Divalent metal cation transporter MntH (461 aa).

The next 11 membrane-spanning stretches (helical) occupy residues alanine 56–tryptophan 76, threonine 89–alanine 109, alanine 132–isoleucine 152, leucine 160–isoleucine 180, alanine 193–alanine 213, isoleucine 230–proline 250, isoleucine 285–phenylalanine 305, leucine 322–cysteine 342, alanine 378–glutamine 398, leucine 399–valine 419, and serine 433–valine 453.

Belongs to the NRAMP family.

Its subcellular location is the cell inner membrane. Its function is as follows. H(+)-stimulated, divalent metal cation uptake system. This Agrobacterium fabrum (strain C58 / ATCC 33970) (Agrobacterium tumefaciens (strain C58)) protein is Divalent metal cation transporter MntH.